The sequence spans 2879 residues: Peramine synthetase ppzA (2879 aa).

Residues 1 to 12 are compositionally biased toward basic and acidic residues; the sequence is MTYDEGGHRNNE. Residues 1 to 52 form a disordered region; sequence MTYDEGGHRNNEETPQDVNMSSNNEGMSTSSPTGSYGEIIGQATVSVPQEDQ. Polar residues predominate over residues 16 to 34; the sequence is QDVNMSSNNEGMSTSSPTG. Residues 351–747 form an adenylation 1 region; that stretch reads QEQCRLQPNT…VGRKDTQVKI (397 aa). The Carrier 1 domain occupies 882–958; it reads QPLSDMERLL…DLSRQSKYIE (77 aa). Position 919 is an O-(pantetheine 4'-phosphoryl)serine (Ser-919). The tract at residues 997-1410 is condensation; that stretch reads DAYPCTPLQE…ITILTTEDLE (414 aa). The interval 1433–1827 is adenylation 2; that stretch reads DKVQHRPNAP…LSFVRRKDTT (395 aa). Residues 1958–2050 are methylation (Met) domain; that stretch reads LEIGCGSGMM…KYLVKLIQDI (93 aa). The Carrier 2 domain occupies 2370-2448; the sequence is WPTTDTGKEL…RLLLDCCCDD (79 aa). The residue at position 2407 (Ser-2407) is an O-(pantetheine 4'-phosphoryl)serine. The thiesterase (TE) domain stretch occupies residues 2500 to 2817; the sequence is TVLLTGANGF…LEDMLQDLDD (318 aa).

The protein belongs to the NRP synthetase family. Requires pantetheine 4'-phosphate as cofactor.

The enzyme catalyses (S)-1-pyrroline-5-carboxylate + L-arginine + S-adenosyl-L-methionine + 2 ATP = peramine + 2 AMP + S-adenosyl-L-homocysteine + 2 diphosphate + H2O + 2 H(+). The protein operates within secondary metabolite biosynthesis. Functionally, nonribosomal peptide synthetase; part of the gene cluster that mediates the biosynthesis of pyrrolopyrazines, secondary metabolites showing insecticidal activity. The single multifunctional NRPS ppzA is responsible for the biosynthesis of peramine. The condensation domain of ppzA is proposed to catalyze formation of a peptide bond between 1-pyrroline-5-carboxylate and arginine. The methylation domain of ppzA would catalyze the N-methylation of the alpha-amino group of arginine. The reductase domain is proposed to be responsible for reduction of the thioester and the cyclization to form an iminium ion resulting in release from the peptide synthetase. Deprotonation of this intermediate and oxidation of the pyrroline ring would give rise to peramine. This final oxidation to give the pyrrole functionality may be spontaneous. In Epichloe species that produce only peramine, the peramine synthetase gene is not localized in a gene cluster, in contrast to Metarhizium species that contain additional pyrrolopyrazine biosynthesis genes. The 2-oxoglutarate-Fe(II) type oxidoreductase ppzC hydroxylates peramine to yield the newly identified compound 8-hydroxyperamine whereas ppzD converts L-proline into trans-4-hydroxy-L-proline, a precursor of peramine biosynthesis. The chain is Peramine synthetase ppzA from Metarhizium rileyi (strain RCEF 4871) (Nomuraea rileyi).